Here is a 416-residue protein sequence, read N- to C-terminus: 2-amino-3-ketobutyrate coenzyme A ligase, mitochondrial (416 aa).

The transit peptide at 1–18 (MWASFMWHGALSPGRRAH) directs the protein to the mitochondrion. Lys42 carries the N6-acetyllysine; alternate modification. The residue at position 42 (Lys42) is an N6-succinyllysine; alternate. 131–132 (CF) lines the pyridoxal 5'-phosphate pocket. A substrate-binding site is contributed by His156. The residue at position 184 (Lys184) is an N6-acetyllysine; alternate. An N6-succinyllysine; alternate modification is found at Lys184. Pyridoxal 5'-phosphate-binding positions include Ser203, 259–262 (TLGK), and 292–293 (SN). Lys262 carries the post-translational modification N6-(pyridoxal phosphate)lysine. 2 positions are modified to N6-succinyllysine: Lys323 and Lys365. Lys380 carries the post-translational modification N6-acetyllysine; alternate. At Lys380 the chain carries N6-succinyllysine; alternate. Arg386 lines the substrate pocket.

It belongs to the class-II pyridoxal-phosphate-dependent aminotransferase family. Pyridoxal 5'-phosphate is required as a cofactor.

The protein localises to the mitochondrion. Its subcellular location is the nucleus. The catalysed reaction is glycine + acetyl-CoA = (2S)-2-amino-3-oxobutanoate + CoA. The protein operates within amino-acid degradation; L-threonine degradation via oxydo-reductase pathway; glycine from L-threonine: step 2/2. Its function is as follows. Pyridoxal phosphate (PLP) dependent enzyme, which catalyzes the cleavage of 2-amino-3-oxobutanoate to glycine and acetyl-CoA. Catalyzes the second reaction step on the main metabolic degradation pathway for L-threonine. The chain is 2-amino-3-ketobutyrate coenzyme A ligase, mitochondrial (Gcat) from Mus musculus (Mouse).